The sequence spans 456 residues: Bifunctional protein GlmU (456 aa).

The tract at residues 1–230 is pyrophosphorylase; sequence MDKRFAVVLA…FQETLGVNDR (230 aa). Residues 9-12, K23, Q73, and 78-79 contribute to the UDP-N-acetyl-alpha-D-glucosamine site; these read LAAG and GT. Residue D103 participates in Mg(2+) binding. Residues G140, E155, N170, and N228 each coordinate UDP-N-acetyl-alpha-D-glucosamine. Position 228 (N228) interacts with Mg(2+). The tract at residues 231 to 251 is linker; that stretch reads VALSQAEQFMKERINKRHMQN. Residues 252 to 456 are N-acetyltransferase; it reads GVTLIDPMNT…DDYVKNIHKK (205 aa). UDP-N-acetyl-alpha-D-glucosamine-binding residues include R333 and K351. The active-site Proton acceptor is H363. Residues Y366 and N377 each contribute to the UDP-N-acetyl-alpha-D-glucosamine site. Residues 386 to 387, A423, and R440 contribute to the acetyl-CoA site; that span reads NY.

In the N-terminal section; belongs to the N-acetylglucosamine-1-phosphate uridyltransferase family. This sequence in the C-terminal section; belongs to the transferase hexapeptide repeat family. In terms of assembly, homotrimer. Requires Mg(2+) as cofactor.

It localises to the cytoplasm. The enzyme catalyses alpha-D-glucosamine 1-phosphate + acetyl-CoA = N-acetyl-alpha-D-glucosamine 1-phosphate + CoA + H(+). The catalysed reaction is N-acetyl-alpha-D-glucosamine 1-phosphate + UTP + H(+) = UDP-N-acetyl-alpha-D-glucosamine + diphosphate. The protein operates within nucleotide-sugar biosynthesis; UDP-N-acetyl-alpha-D-glucosamine biosynthesis; N-acetyl-alpha-D-glucosamine 1-phosphate from alpha-D-glucosamine 6-phosphate (route II): step 2/2. Its pathway is nucleotide-sugar biosynthesis; UDP-N-acetyl-alpha-D-glucosamine biosynthesis; UDP-N-acetyl-alpha-D-glucosamine from N-acetyl-alpha-D-glucosamine 1-phosphate: step 1/1. It participates in bacterial outer membrane biogenesis; LPS lipid A biosynthesis. In terms of biological role, catalyzes the last two sequential reactions in the de novo biosynthetic pathway for UDP-N-acetylglucosamine (UDP-GlcNAc). The C-terminal domain catalyzes the transfer of acetyl group from acetyl coenzyme A to glucosamine-1-phosphate (GlcN-1-P) to produce N-acetylglucosamine-1-phosphate (GlcNAc-1-P), which is converted into UDP-GlcNAc by the transfer of uridine 5-monophosphate (from uridine 5-triphosphate), a reaction catalyzed by the N-terminal domain. The polypeptide is Bifunctional protein GlmU (Bacillus subtilis (strain 168)).